The chain runs to 333 residues: S-adenosylmethionine-dependent nucleotide dehydratase (333 aa).

A Radical SAM core domain is found at 1–239 (MNIKTIVINW…SAPQKQNNVI (239 aa)). 3 residues coordinate [4Fe-4S] cluster: C16, C20, and C23.

The protein belongs to the radical SAM superfamily. Viperin family. Requires [4Fe-4S] cluster as cofactor.

The enzyme catalyses GTP + AH2 + S-adenosyl-L-methionine = 3'-deoxy-3',4'-didehydro-GTP + 5'-deoxyadenosine + L-methionine + A + H2O + H(+). Functionally, expression of pVip56 in E.coli (strain MG1655) confers resistance to phage P1; has no effect against T7. Catalyzes the conversion of guanosine triphosphate (GTP) to 3'-deoxy-3',4'-didehydro-GTP (ddhGTP), probably via a SAM-dependent radical mechanism. The modified nucleotide represses transcription from T7 RNA polymerase-directed genes (possibly by acting as chain terminators), strongly suggesting these nucleotides block viral polymerase transcription. How this protein allows bacteria to resist viruses that do not encode their own RNA polymerase (such as lambda, P1) is unknown. The protein is S-adenosylmethionine-dependent nucleotide dehydratase of Fibrobacter sp. (strain UWH6).